We begin with the raw amino-acid sequence, 203 residues long: Cilia- and flagella-associated protein 20 (203 aa).

Belongs to the CFAP20 family.

Its subcellular location is the nucleus. The protein resides in the cytoplasm. The protein localises to the cytoskeleton. It is found in the microtubule organizing center. It localises to the centrosome. Its subcellular location is the centriole. The protein resides in the cilium basal body. The protein localises to the cilium axoneme. Functionally, cilium- and flagellum-specific protein that plays a role in axonemal structure organization and motility. Microtubule inner protein (MIP) part of the dynein-decorated doublet microtubules (DMTs) in cilia axoneme, which is required for motile cilia beating. Involved in the regulation of the size and morphology of cilia. Required for axonemal microtubules polyglutamylation. This Caenorhabditis elegans protein is Cilia- and flagella-associated protein 20.